Reading from the N-terminus, the 23-residue chain is Thylakoid lumenal 17.4 kDa protein (23 aa).

Positions 1–23 (ANQRLPPLSNDPDRCERAFVGNT) are disordered.

It localises to the plastid. The protein localises to the chloroplast thylakoid lumen. The polypeptide is Thylakoid lumenal 17.4 kDa protein (Spinacia oleracea (Spinach)).